We begin with the raw amino-acid sequence, 196 residues long: DnaA initiator-associating protein DiaA (196 aa).

Positions 34-196 (LVHSLLNGNK…DNTLFLHQDD (163 aa)) constitute an SIS domain.

It belongs to the SIS family. DiaA subfamily. As to quaternary structure, homotetramer; dimer of dimers.

Functionally, required for the timely initiation of chromosomal replication via direct interactions with the DnaA initiator protein. The sequence is that of DnaA initiator-associating protein DiaA from Salmonella paratyphi A (strain ATCC 9150 / SARB42).